Here is a 774-residue protein sequence, read N- to C-terminus: MRRRVALSTAIALLVGAQLCVAAEVEVAGAGGGVVRRRSLHQPFFPIEWSPPPPMSGSEAVPPPPPAAAASATTGGGRSTTTVMNTVAIALSAGLVALAVASYSCCLLLRRRRREEEDDGDRAAKRAVGAAAAVAARVPSDVGSSSRQHRSPPPSSTASDAIYLDPLTTLVEVRQHEKSPDLRPLPLLKQPSPDLRPLPPLKRPESQPPPPPPSTPPLTTTGYSTDEEDQATYYTAPKTAMSSFSRSTSQHSTLEQTAMPPMAAPAPPQTNPPRPVRPPPPPPPPRQRLLRPLPAESPPPAALANLELTGSPVKPAVEDRGGENSGAARPPKPPHLKPLHWDKLRAISGRTTVWDQVKNSDTFRVDEEAMESLFLNSGGGGAGSSDPAARRGGSGKQERRLLDPKRLQNVAIMLKSLNVAADEVIGALVRGNPEDLGSEFYETLAKMAPTKEEELKLKGYSGDLSKIDPAERFLKDVLGVPFAFERVDAMLYRANFDNEVNYLRKSFGTLEAACEELRSSKLFLKLLDAVLKTGNRMNDGTNRGEARAFKLDTLLKLADIKSTDGRTTLLHFVVKEIIRSEGFDSDQSAVNPGSGSKEQFKRDGLKLLAGLSSELSNVKRAATLEMDTLSGNILRLEADLEKVKLVLQLKETCSDQGASENFFQAMVVFLRRAEAEIKNMKTAEENALRLVKETTEYFHGDATKEEPHPLRIFVVVDEFLLILDRVCRDVGRTPERVMMGSGKSFRVPAGTSLPPHRNENRRVLSSSDEDSSSS.

The signal sequence occupies residues 1–22 (MRRRVALSTAIALLVGAQLCVA). Residues 51–67 (PPPPMSGSEAVPPPPPA) show a composition bias toward pro residues. Residues 51–78 (PPPPMSGSEAVPPPPPAAAASATTGGGR) form a disordered region. The segment covering 68–78 (AAASATTGGGR) has biased composition (low complexity). The chain crosses the membrane as a helical span at residues 89-109 (IALSAGLVALAVASYSCCLLL). Disordered regions lie at residues 130–163 (AAAAVAARVPSDVGSSSRQHRSPPPSSTASDAIY), 176–338 (HEKS…HLKP), 374–402 (FLNSGGGGAGSSDPAARRGGSGKQERRLL), and 740–774 (GSGKSFRVPAGTSLPPHRNENRRVLSSSDEDSSSS). The segment covering 194 to 216 (DLRPLPPLKRPESQPPPPPPSTP) has biased composition (pro residues). The span at 242–261 (SSFSRSTSQHSTLEQTAMPP) shows a compositional bias: low complexity. Residues 262–286 (MAAPAPPQTNPPRPVRPPPPPPPPR) are compositionally biased toward pro residues. Residues 326 to 749 (GAARPPKPPH…GSGKSFRVPA (424 aa)) form the FH2 domain.

The protein belongs to the formin-like family. Class-I subfamily.

The protein localises to the membrane. The polypeptide is Formin-like protein 13 (FH13) (Oryza sativa subsp. japonica (Rice)).